A 142-amino-acid polypeptide reads, in one-letter code: Class II hydrophobin 7 (142 aa).

A signal peptide spans 1-16 (MKFLTVAIVLAAAASA). Cystine bridges form between Cys-73-Cys-123, Cys-84-Cys-114, Cys-85-Cys-97, and Cys-124-Cys-135.

This sequence belongs to the cerato-ulmin hydrophobin family. In terms of assembly, homodimer. Homodimers further self-assemble to form highly ordered films at water-air interfaces through intermolecular interactions.

It localises to the secreted. Its subcellular location is the cell wall. Functionally, aerial growth, conidiation, and dispersal of filamentous fungi in the environment rely upon a capability of their secreting small amphipathic proteins called hydrophobins (HPBs) with low sequence identity. Class I can self-assemble into an outermost layer of rodlet bundles on aerial cell surfaces, conferring cellular hydrophobicity that supports fungal growth, development and dispersal; whereas Class II form highly ordered films at water-air interfaces through intermolecular interactions but contribute nothing to the rodlet structure. The protein is Class II hydrophobin 7 of Trichoderma asperellum (strain ATCC 204424 / CBS 433.97 / NBRC 101777).